A 188-amino-acid chain; its full sequence is Elongation factor P (188 aa).

An N6-(3,6-diaminohexanoyl)-5-hydroxylysine modification is found at Lys-34.

The protein belongs to the elongation factor P family. In terms of processing, may be beta-lysylated on the epsilon-amino group of Lys-34 by the combined action of EpmA and EpmB, and then hydroxylated on the C5 position of the same residue by EpmC (if this protein is present). Lysylation is critical for the stimulatory effect of EF-P on peptide-bond formation. The lysylation moiety may extend toward the peptidyltransferase center and stabilize the terminal 3-CCA end of the tRNA. Hydroxylation of the C5 position on Lys-34 may allow additional potential stabilizing hydrogen-bond interactions with the P-tRNA.

The protein resides in the cytoplasm. It participates in protein biosynthesis; polypeptide chain elongation. Its function is as follows. Involved in peptide bond synthesis. Alleviates ribosome stalling that occurs when 3 or more consecutive Pro residues or the sequence PPG is present in a protein, possibly by augmenting the peptidyl transferase activity of the ribosome. Modification of Lys-34 is required for alleviation. This is Elongation factor P from Haemophilus influenzae (strain PittGG).